The chain runs to 154 residues: Myoglobin (154 aa).

Residues 2 to 148 enclose the Globin domain; that stretch reads GLSDGEWQLV…FRNDMAAKYK (147 aa). The residue at position 4 (serine 4) is a Phosphoserine. Residue histidine 65 participates in nitrite binding. Histidine 65 contacts O2. Position 68 is a phosphothreonine (threonine 68). Histidine 94 is a heme b binding site.

It belongs to the globin family. In terms of assembly, monomeric.

It localises to the cytoplasm. Its subcellular location is the sarcoplasm. It catalyses the reaction Fe(III)-heme b-[protein] + nitric oxide + H2O = Fe(II)-heme b-[protein] + nitrite + 2 H(+). The catalysed reaction is H2O2 + AH2 = A + 2 H2O. In terms of biological role, monomeric heme protein which primary function is to store oxygen and facilitate its diffusion within muscle tissues. Reversibly binds oxygen through a pentacoordinated heme iron and enables its timely and efficient release as needed during periods of heightened demand. Depending on the oxidative conditions of tissues and cells, and in addition to its ability to bind oxygen, it also has a nitrite reductase activity whereby it regulates the production of bioactive nitric oxide. Under stress conditions, like hypoxia and anoxia, it also protects cells against reactive oxygen species thanks to its pseudoperoxidase activity. In Lagothrix lagotricha (Brown woolly monkey), this protein is Myoglobin (MB).